The primary structure comprises 477 residues: Glycogen synthase (477 aa).

Residue Lys-15 coordinates ADP-alpha-D-glucose.

The protein belongs to the glycosyltransferase 1 family. Bacterial/plant glycogen synthase subfamily.

It catalyses the reaction [(1-&gt;4)-alpha-D-glucosyl](n) + ADP-alpha-D-glucose = [(1-&gt;4)-alpha-D-glucosyl](n+1) + ADP + H(+). It participates in glycan biosynthesis; glycogen biosynthesis. Its function is as follows. Synthesizes alpha-1,4-glucan chains using ADP-glucose. In Edwardsiella ictaluri (strain 93-146), this protein is Glycogen synthase.